The primary structure comprises 295 residues: Ribosomal RNA small subunit methyltransferase A (295 aa).

The S-adenosyl-L-methionine site is built by N29, L31, G56, E77, D102, and N128.

Belongs to the class I-like SAM-binding methyltransferase superfamily. rRNA adenine N(6)-methyltransferase family. RsmA subfamily.

Its subcellular location is the cytoplasm. The enzyme catalyses adenosine(1518)/adenosine(1519) in 16S rRNA + 4 S-adenosyl-L-methionine = N(6)-dimethyladenosine(1518)/N(6)-dimethyladenosine(1519) in 16S rRNA + 4 S-adenosyl-L-homocysteine + 4 H(+). Its function is as follows. Specifically dimethylates two adjacent adenosines (A1518 and A1519) in the loop of a conserved hairpin near the 3'-end of 16S rRNA in the 30S particle. May play a critical role in biogenesis of 30S subunits. This is Ribosomal RNA small subunit methyltransferase A from Listeria welshimeri serovar 6b (strain ATCC 35897 / DSM 20650 / CCUG 15529 / CIP 8149 / NCTC 11857 / SLCC 5334 / V8).